The sequence spans 117 residues: Large ribosomal subunit protein bL19 (117 aa).

It belongs to the bacterial ribosomal protein bL19 family.

Functionally, this protein is located at the 30S-50S ribosomal subunit interface and may play a role in the structure and function of the aminoacyl-tRNA binding site. The sequence is that of Large ribosomal subunit protein bL19 from Exiguobacterium sibiricum (strain DSM 17290 / CCUG 55495 / CIP 109462 / JCM 13490 / 255-15).